Here is a 396-residue protein sequence, read N- to C-terminus: Stearoyl-[acyl-carrier-protein] 9-desaturase, chloroplastic (396 aa).

A chloroplast-targeting transit peptide spans 1-33; that stretch reads MALKLNPFLSQTQKLPSFALPPMASTRSPKFYM. Residues glutamate 138, glutamate 176, histidine 179, glutamate 229, glutamate 262, and histidine 265 each contribute to the Fe cation site.

This sequence belongs to the fatty acid desaturase type 2 family. Homodimer. Fe(2+) serves as cofactor. Higher levels in developing seeds than in leaf and root tissues.

It is found in the plastid. The protein resides in the chloroplast. It catalyses the reaction octadecanoyl-[ACP] + 2 reduced [2Fe-2S]-[ferredoxin] + O2 + 2 H(+) = (9Z)-octadecenoyl-[ACP] + 2 oxidized [2Fe-2S]-[ferredoxin] + 2 H2O. It functions in the pathway lipid metabolism; fatty acid metabolism. Converts stearoyl-ACP to oleoyl-ACP by introduction of a cis double bond between carbons 9 and 10 of the acyl chain. This chain is Stearoyl-[acyl-carrier-protein] 9-desaturase, chloroplastic, found in Ricinus communis (Castor bean).